The chain runs to 169 residues: Endoribonuclease YbeY (169 aa).

The Zn(2+) site is built by His130, His134, and His140.

This sequence belongs to the endoribonuclease YbeY family. It depends on Zn(2+) as a cofactor.

The protein resides in the cytoplasm. Its function is as follows. Single strand-specific metallo-endoribonuclease involved in late-stage 70S ribosome quality control and in maturation of the 3' terminus of the 16S rRNA. This is Endoribonuclease YbeY from Neisseria meningitidis serogroup B (strain ATCC BAA-335 / MC58).